The chain runs to 591 residues: Frizzled and smoothened-like protein F (591 aa).

The N-terminal stretch at 1–17 (MKILIIFIIFIISYISG) is a signal peptide. Residues 18 to 244 (FEIPKGFGIG…KWDQLLTMSK (227 aa)) are Extracellular-facing. Residues 30 to 177 (IPDAECLNYI…GTFAVPCSDP (148 aa)) enclose the FZ domain. Cystine bridges form between Cys35–Cys105, Cys48–Cys98, and Cys123–Cys174. Asn167, Asn187, Asn202, and Asn230 each carry an N-linked (GlcNAc...) asparagine glycan. The helical transmembrane segment at 245-265 (ILSTISFILSLYNVLTFGIIN) threads the bilayer. At 266 to 275 (KKVSDPHKCT) the chain is on the cytoplasmic side. Residues 276 to 296 (CFFSGSIALVNLCDIITYGIG) traverse the membrane as a helical segment. At 297-321 (YEELLCPEPGRSAKQQLDPVCGLTG) the chain is on the extracellular side. Residues 322-342 (AFFHLGITYCVLWSMTMGLVL) traverse the membrane as a helical segment. The Cytoplasmic portion of the chain corresponds to 343–353 (YCSVKRQKWFK). A helical transmembrane segment spans residues 354-374 (FNYFLIGNTTFTITTVVIAAA). Topologically, residues 375–397 (TSKFEAGLGSIECWIRDRWYAIS) are extracellular. The chain crosses the membrane as a helical span at residues 398 to 418 (LFWIPCGIALLIGSFCIIAVI). The Cytoplasmic portion of the chain corresponds to 419 to 442 (HEVYKTSKKSISNRNDLLQRELKP). The chain crosses the membrane as a helical span at residues 443-463 (LLIVIFISGSFLYLFIFFFDI). The Extracellular segment spans residues 464–495 (ERKFGGYRSAVEDYVLCLLNGSQEECFTTGPS). Residue Asn483 is glycosylated (N-linked (GlcNAc...) asparagine). The helical transmembrane segment at 496–516 (YVPYFLFYLVIRWFGIIFFLF) threads the bilayer. The Cytoplasmic portion of the chain corresponds to 517–591 (YGTSNIARKI…AVELESIKIN (75 aa)). The segment covering 538 to 571 (SSISPKSTPKSSPKNSDSKINSNSTNNNNMILND) has biased composition (low complexity). Positions 538–573 (SSISPKSTPKSSPKNSDSKINSNSTNNNNMILNDNN) are disordered.

Belongs to the G-protein coupled receptor Fz/Smo family.

It is found in the membrane. In Dictyostelium discoideum (Social amoeba), this protein is Frizzled and smoothened-like protein F (fslF).